The following is a 40-amino-acid chain: Photosystem II reaction center protein J (40 aa).

Residues 8–28 (IPLWLISTVTGTLVIGLMGIF) form a helical membrane-spanning segment.

This sequence belongs to the PsbJ family. In terms of assembly, PSII is composed of 1 copy each of membrane proteins PsbA, PsbB, PsbC, PsbD, PsbE, PsbF, PsbH, PsbI, PsbJ, PsbK, PsbL, PsbM, PsbT, PsbX, PsbY, PsbZ, Psb30/Ycf12, at least 3 peripheral proteins of the oxygen-evolving complex and a large number of cofactors. It forms dimeric complexes.

It is found in the plastid. The protein localises to the chloroplast thylakoid membrane. Its function is as follows. One of the components of the core complex of photosystem II (PSII). PSII is a light-driven water:plastoquinone oxidoreductase that uses light energy to abstract electrons from H(2)O, generating O(2) and a proton gradient subsequently used for ATP formation. It consists of a core antenna complex that captures photons, and an electron transfer chain that converts photonic excitation into a charge separation. The sequence is that of Photosystem II reaction center protein J from Ginkgo biloba (Ginkgo).